We begin with the raw amino-acid sequence, 334 residues long: Phospholipase A1 2 (334 aa).

Positions 1–23 (MMNLKYLLFFCLVQALHYCYAYG) are cleaved as a signal peptide. A propeptide spanning residues 24–33 (DPSLSNELDR) is cleaved from the precursor. Cysteine 37 and cysteine 120 are disulfide-bonded. The active-site Nucleophile is the serine 170. Aspartate 198 (charge relay system) is an active-site residue. Intrachain disulfides connect cysteine 209–cysteine 214 and cysteine 252–cysteine 261. Histidine 263 functions as the Charge relay system in the catalytic mechanism. Cystine bridges form between cysteine 278-cysteine 302, cysteine 279-cysteine 327, and cysteine 295-cysteine 300.

Belongs to the AB hydrolase superfamily. Lipase family. Post-translationally, not glycosylated. Expressed by the venom gland.

It is found in the secreted. The catalysed reaction is a 1,2-diacyl-sn-glycero-3-phosphocholine + H2O = a 2-acyl-sn-glycero-3-phosphocholine + a fatty acid + H(+). Catalyzes the hydrolysis of phosphatidylcholine with phospholipase A1 activity (6.3 U/ml). May act as an allergen and induce hemolytic activity. This Vespa affinis (Lesser banded hornet) protein is Phospholipase A1 2.